Here is a 151-residue protein sequence, read N- to C-terminus: D-aminoacyl-tRNA deacylase (151 aa).

The short motif at 136-137 (GP) is the Gly-cisPro motif, important for rejection of L-amino acids element.

It belongs to the DTD family. Homodimer.

The protein localises to the cytoplasm. It catalyses the reaction glycyl-tRNA(Ala) + H2O = tRNA(Ala) + glycine + H(+). It carries out the reaction a D-aminoacyl-tRNA + H2O = a tRNA + a D-alpha-amino acid + H(+). Its function is as follows. An aminoacyl-tRNA editing enzyme that deacylates mischarged D-aminoacyl-tRNAs. Also deacylates mischarged glycyl-tRNA(Ala), protecting cells against glycine mischarging by AlaRS. Acts via tRNA-based rather than protein-based catalysis; rejects L-amino acids rather than detecting D-amino acids in the active site. By recycling D-aminoacyl-tRNA to D-amino acids and free tRNA molecules, this enzyme counteracts the toxicity associated with the formation of D-aminoacyl-tRNA entities in vivo and helps enforce protein L-homochirality. This is D-aminoacyl-tRNA deacylase from Streptococcus gordonii (strain Challis / ATCC 35105 / BCRC 15272 / CH1 / DL1 / V288).